The sequence spans 338 residues: Probable cytosolic iron-sulfur protein assembly protein Ciao1 (338 aa).

WD repeat units lie at residues 12 to 51 (GHRG…RWVP), 58 to 97 (GHTR…FECN), 102 to 141 (GHEN…EYEC), 147 to 186 (THSQ…SDWS), 193 to 232 (SHDS…NEFG), 234 to 252 (ACPD…LSGF), 253 to 291 (HSRA…PANE), and 302 to 338 (AHSQ…EDDE).

The protein belongs to the WD repeat CIA1 family.

Its function is as follows. Essential component of the cytosolic iron-sulfur (Fe/S) protein assembly machinery. Required for the maturation of extramitochondrial Fe/S proteins. The chain is Probable cytosolic iron-sulfur protein assembly protein Ciao1 from Culex quinquefasciatus (Southern house mosquito).